Reading from the N-terminus, the 358-residue chain is MFKMVSSPHTHSGKLTAHIMLWAILAMMPAFFTQIYYFGFGVVLQSALAIGTAIIAEFIAIKLRGKKPLNYLSDFSVALTALILAMAIPPYAPYWIIIIGTLCAVLLGKQVYGGLGQNPFNPAMIGYVILLISFPLQMTTWMPPINLLQEPPTFSDAFSLIFSGLTTDGFTLSQLTHNIDGITQATPLDSAKIFYKSHTQLNDFYELIKLPIFMGNGTDFAQGWWQINVAFLAGGIFLILKRVIHWQIPVAMLVTFFCLATATAFTGFTHLSAISQLVSGAMMFGAFFIATDPVTASITPRGKIIFGALVGLFVYLIRYHGNYPDGVAFAILLSNICVPLIDHYTRPRVSGYPTKGRK.

Helical transmembrane passes span Ile24–Leu44, Leu79–Ile99, and Ile125–Ile145. Position 186 is an FMN phosphoryl threonine (Thr186). 5 helical membrane-spanning segments follow: residues Phe220–Leu240, Ile248–Phe268, Leu271–Thr291, Ser297–Ile317, and Gly321–Ile341.

It belongs to the NqrB/RnfD family. As to quaternary structure, the complex is composed of six subunits: RnfA, RnfB, RnfC, RnfD, RnfE and RnfG. Requires FMN as cofactor.

Its subcellular location is the cell inner membrane. In terms of biological role, part of a membrane-bound complex that couples electron transfer with translocation of ions across the membrane. The polypeptide is Ion-translocating oxidoreductase complex subunit D (Haemophilus influenzae (strain ATCC 51907 / DSM 11121 / KW20 / Rd)).